The chain runs to 79 residues: Cell division protein ZapB (79 aa).

A coiled-coil region spans residues 4-78 (EVFEKLEAKV…LRALLGKMEE (75 aa)).

This sequence belongs to the ZapB family. In terms of assembly, homodimer. The ends of the coiled-coil dimer bind to each other, forming polymers. Interacts with FtsZ.

The protein resides in the cytoplasm. In terms of biological role, non-essential, abundant cell division factor that is required for proper Z-ring formation. It is recruited early to the divisome by direct interaction with FtsZ, stimulating Z-ring assembly and thereby promoting cell division earlier in the cell cycle. Its recruitment to the Z-ring requires functional FtsA or ZipA. In Pectobacterium atrosepticum (strain SCRI 1043 / ATCC BAA-672) (Erwinia carotovora subsp. atroseptica), this protein is Cell division protein ZapB.